Consider the following 325-residue polypeptide: Protein ORANGE-ORANGE, chloroplastic (325 aa).

The N-terminal 54 residues, M1–S54, are a transit peptide targeting the chloroplast. Low complexity predominate over residues A53–S71. The tract at residues A53 to T77 is disordered. The next 2 helical transmembrane spans lie at L164–A184 and I217–V237. The segment at V226–H317 is CR-type-like. The stretch at C248–G255 is one CXXCXGXG motif repeat. One copy of the CXXCXXXG motif repeat lies at C259–G266. The stretch at C292–G299 is one CXXCXGXG motif repeat. One copy of the CXXCXXXG motif repeat lies at C303–G310.

The protein belongs to the orange-like family.

It is found in the plastid. The protein localises to the chloroplast membrane. In terms of biological role, triggers accumulation of carotenoids, mainly beta-carotene, in fruit flesh. The polypeptide is Protein ORANGE-ORANGE, chloroplastic (Cucumis melo (Muskmelon)).